We begin with the raw amino-acid sequence, 150 residues long: 3-dehydroquinate dehydratase (150 aa).

The active-site Proton acceptor is the Tyr26. Substrate contacts are provided by Asn77, His83, and Asp90. The active-site Proton donor is the His103. Residues 104–105 (LS) and Arg114 contribute to the substrate site.

The protein belongs to the type-II 3-dehydroquinase family. As to quaternary structure, homododecamer.

It catalyses the reaction 3-dehydroquinate = 3-dehydroshikimate + H2O. The protein operates within metabolic intermediate biosynthesis; chorismate biosynthesis; chorismate from D-erythrose 4-phosphate and phosphoenolpyruvate: step 3/7. In terms of biological role, catalyzes a trans-dehydration via an enolate intermediate. This Yersinia pseudotuberculosis serotype O:1b (strain IP 31758) protein is 3-dehydroquinate dehydratase.